A 259-amino-acid chain; its full sequence is 5'-nucleotidase SurE (259 aa).

Residues D8, D9, S39, and N96 each coordinate a divalent metal cation.

Belongs to the SurE nucleotidase family. A divalent metal cation is required as a cofactor.

The protein resides in the cytoplasm. It catalyses the reaction a ribonucleoside 5'-phosphate + H2O = a ribonucleoside + phosphate. In terms of biological role, nucleotidase that shows phosphatase activity on nucleoside 5'-monophosphates. The chain is 5'-nucleotidase SurE from Pelotomaculum thermopropionicum (strain DSM 13744 / JCM 10971 / SI).